Reading from the N-terminus, the 133-residue chain is Small ribosomal subunit protein uS8 (133 aa).

The protein belongs to the universal ribosomal protein uS8 family. In terms of assembly, part of the 30S ribosomal subunit.

Functionally, one of the primary rRNA binding proteins, it binds directly to 16S rRNA central domain where it helps coordinate assembly of the platform of the 30S subunit. The protein is Small ribosomal subunit protein uS8 of Saccharolobus solfataricus (strain ATCC 35092 / DSM 1617 / JCM 11322 / P2) (Sulfolobus solfataricus).